The chain runs to 413 residues: Serine hydroxymethyltransferase (413 aa).

(6S)-5,6,7,8-tetrahydrofolate is bound by residues Leu117 and 121-123 (GHL). Lys226 carries the N6-(pyridoxal phosphate)lysine modification. (6S)-5,6,7,8-tetrahydrofolate is bound at residue 349 to 351 (SPF).

This sequence belongs to the SHMT family. Homodimer. The cofactor is pyridoxal 5'-phosphate.

Its subcellular location is the cytoplasm. It catalyses the reaction (6R)-5,10-methylene-5,6,7,8-tetrahydrofolate + glycine + H2O = (6S)-5,6,7,8-tetrahydrofolate + L-serine. Its pathway is one-carbon metabolism; tetrahydrofolate interconversion. It participates in amino-acid biosynthesis; glycine biosynthesis; glycine from L-serine: step 1/1. In terms of biological role, catalyzes the reversible interconversion of serine and glycine with tetrahydrofolate (THF) serving as the one-carbon carrier. This reaction serves as the major source of one-carbon groups required for the biosynthesis of purines, thymidylate, methionine, and other important biomolecules. Also exhibits THF-independent aldolase activity toward beta-hydroxyamino acids, producing glycine and aldehydes, via a retro-aldol mechanism. In Pelobacter propionicus (strain DSM 2379 / NBRC 103807 / OttBd1), this protein is Serine hydroxymethyltransferase.